We begin with the raw amino-acid sequence, 573 residues long: CTP synthase (573 aa).

The interval 1 to 281 is amidoligase domain; sequence MGQTRIQART…DAYVVRRLGL (281 aa). Residue serine 23 coordinates CTP. Residue serine 23 coordinates UTP. ATP is bound by residues 24-29 and aspartate 81; that span reads SLGKGL. 2 residues coordinate Mg(2+): aspartate 81 and glutamate 155. CTP is bound by residues 162–164, 202–207, and lysine 238; these read DIE and KTKPTQ. Residues 202-207 and lysine 238 each bind UTP; that span reads KTKPTQ. The 249-residue stretch at 306 to 554 folds into the Glutamine amidotransferase type-1 domain; sequence EVALVGKYVD…IAAALKYKLA (249 aa). Glycine 369 contributes to the L-glutamine binding site. Cysteine 396 (nucleophile; for glutamine hydrolysis) is an active-site residue. Residues 397–400, glutamate 419, and arginine 480 contribute to the L-glutamine site; that span reads LGLQ. Catalysis depends on residues histidine 527 and glutamate 529.

The protein belongs to the CTP synthase family. Homotetramer.

It catalyses the reaction UTP + L-glutamine + ATP + H2O = CTP + L-glutamate + ADP + phosphate + 2 H(+). It carries out the reaction L-glutamine + H2O = L-glutamate + NH4(+). The enzyme catalyses UTP + NH4(+) + ATP = CTP + ADP + phosphate + 2 H(+). It functions in the pathway pyrimidine metabolism; CTP biosynthesis via de novo pathway; CTP from UDP: step 2/2. Its activity is regulated as follows. Allosterically activated by GTP, when glutamine is the substrate; GTP has no effect on the reaction when ammonia is the substrate. The allosteric effector GTP functions by stabilizing the protein conformation that binds the tetrahedral intermediate(s) formed during glutamine hydrolysis. Inhibited by the product CTP, via allosteric rather than competitive inhibition. Catalyzes the ATP-dependent amination of UTP to CTP with either L-glutamine or ammonia as the source of nitrogen. Regulates intracellular CTP levels through interactions with the four ribonucleotide triphosphates. This is CTP synthase from Nocardia farcinica (strain IFM 10152).